Consider the following 270-residue polypeptide: Diaminopimelate epimerase (270 aa).

Substrate-binding residues include N15, Q49, and N66. The active-site Proton donor is C75. Substrate-binding positions include 76-77, N155, N187, and 204-205; these read GN and ER. C213 acts as the Proton acceptor in catalysis. Residue 214-215 coordinates substrate; it reads GS.

The protein belongs to the diaminopimelate epimerase family. Homodimer.

It localises to the cytoplasm. The enzyme catalyses (2S,6S)-2,6-diaminopimelate = meso-2,6-diaminopimelate. The protein operates within amino-acid biosynthesis; L-lysine biosynthesis via DAP pathway; DL-2,6-diaminopimelate from LL-2,6-diaminopimelate: step 1/1. In terms of biological role, catalyzes the stereoinversion of LL-2,6-diaminopimelate (L,L-DAP) to meso-diaminopimelate (meso-DAP), a precursor of L-lysine and an essential component of the bacterial peptidoglycan. The protein is Diaminopimelate epimerase of Rickettsia conorii (strain ATCC VR-613 / Malish 7).